A 395-amino-acid polypeptide reads, in one-letter code: uncharacterized protein (395 aa).

Disordered stretches follow at residues 17–155 and 276–304; these read EVKK…QVKT and EERE…HEQK. 2 stretches are compositionally biased toward polar residues: residues 42–71 and 81–96; these read DGNN…SNVV and GDAS…NVVK. The segment covering 103–133 has biased composition (basic and acidic residues); sequence VAEKPEKEDLAVIESEDKAAKPDGEIKKNVE. Low complexity predominate over residues 134 to 143; the sequence is TEVTSRSTSS. 2 stretches are compositionally biased toward basic and acidic residues: residues 144–155 and 276–290; these read QEKDELEKQVKT and EERE…KEQS. The stretch at 224–351 forms a coiled coil; the sequence is LKMNGKEDDL…QRRLKELEAM (128 aa). The span at 291-300 shows a compositional bias: polar residues; sequence SEGSKTANQT.

The protein resides in the cytoplasm. This is an uncharacterized protein from Schizosaccharomyces pombe (strain 972 / ATCC 24843) (Fission yeast).